We begin with the raw amino-acid sequence, 164 residues long: HTH-type transcriptional regulator IscR (164 aa).

An HTH rrf2-type domain is found at 2-131 (RLTSKGRYAV…NNITLDELVN (130 aa)). A DNA-binding region (H-T-H motif) is located at residues 28 to 51 (LADISERQGISLSYLEQLFSRLRK). [2Fe-2S] cluster contacts are provided by Cys-92, Cys-98, and Cys-104.

[2Fe-2S] cluster is required as a cofactor.

In terms of biological role, regulates the transcription of several operons and genes involved in the biogenesis of Fe-S clusters and Fe-S-containing proteins. In Pectobacterium carotovorum subsp. carotovorum (strain PC1), this protein is HTH-type transcriptional regulator IscR.